Here is a 510-residue protein sequence, read N- to C-terminus: NAD(P)H-quinone oxidoreductase subunit 2 A, chloroplastic (510 aa).

13 consecutive transmembrane segments (helical) span residues 24–44 (LLLF…GLIL), 57–77 (TPWL…ALLF), 99–119 (IFQF…VEYI), 124–144 (MAIT…MFLC), 149–169 (LITI…LSGY), 183–203 (YLLM…WLYG), 229–249 (ISIA…PAPF), 295–315 (WHLL…LIAI), 323–343 (MLAY…IVGD), 354–374 (YMLF…LFGL), 395–415 (ALSS…AGFF), 418–438 (LYLF…IGLL), and 484–504 (MIVC…IIAI).

It belongs to the complex I subunit 2 family. As to quaternary structure, NDH is composed of at least 16 different subunits, 5 of which are encoded in the nucleus.

Its subcellular location is the plastid. The protein localises to the chloroplast thylakoid membrane. The enzyme catalyses a plastoquinone + NADH + (n+1) H(+)(in) = a plastoquinol + NAD(+) + n H(+)(out). It catalyses the reaction a plastoquinone + NADPH + (n+1) H(+)(in) = a plastoquinol + NADP(+) + n H(+)(out). In terms of biological role, NDH shuttles electrons from NAD(P)H:plastoquinone, via FMN and iron-sulfur (Fe-S) centers, to quinones in the photosynthetic chain and possibly in a chloroplast respiratory chain. The immediate electron acceptor for the enzyme in this species is believed to be plastoquinone. Couples the redox reaction to proton translocation, and thus conserves the redox energy in a proton gradient. This Nuphar advena (Common spatterdock) protein is NAD(P)H-quinone oxidoreductase subunit 2 A, chloroplastic.